The primary structure comprises 452 residues: tRNA modification GTPase MnmE (452 aa).

Residues arginine 24, glutamate 81, and arginine 120 each contribute to the (6S)-5-formyl-5,6,7,8-tetrahydrofolate site. One can recognise a TrmE-type G domain in the interval 216–373; it reads GIKTVIVGAP…LFGAIGRWAD (158 aa). GTP is bound by residues 226–231, 245–251, and 270–273; these read NVGKSS, SAEPGTT, and DTAG. Serine 230 and threonine 251 together coordinate Mg(2+). (6S)-5-formyl-5,6,7,8-tetrahydrofolate is bound at residue lysine 452.

It belongs to the TRAFAC class TrmE-Era-EngA-EngB-Septin-like GTPase superfamily. TrmE GTPase family. In terms of assembly, homodimer. Heterotetramer of two MnmE and two MnmG subunits. K(+) serves as cofactor.

Its subcellular location is the cytoplasm. Functionally, exhibits a very high intrinsic GTPase hydrolysis rate. Involved in the addition of a carboxymethylaminomethyl (cmnm) group at the wobble position (U34) of certain tRNAs, forming tRNA-cmnm(5)s(2)U34. The sequence is that of tRNA modification GTPase MnmE from Opitutus terrae (strain DSM 11246 / JCM 15787 / PB90-1).